We begin with the raw amino-acid sequence, 734 residues long: E3 ubiquitin-protein ligase TRIM56 (734 aa).

The RING-type zinc-finger motif lies at 21-60; the sequence is CKICLEQLHTPKTLPCLHTYCQDCLAQLDIGGQVRCPECR. B box-type zinc fingers lie at residues 98–149 and 164–205; these read KPTC…VVDL and RQAS…CLPL. Residues C169, H172, C192, and H197 each contribute to the Zn(2+) site. The stretch at 215 to 303 forms a coiled coil; the sequence is GLEELLAGVD…KIERQEQVAK (89 aa). The segment covering 372–381 has biased composition (basic and acidic residues); the sequence is EPKQSPKDSG. A disordered region spans residues 372-463; that stretch reads EPKQSPKDSG…SPILRPNLEG (92 aa). Residues 435-448 are compositionally biased toward basic residues; sequence RPNKKKKCKGRGKS. A Phosphoserine modification is found at S454.

Belongs to the TRIM/RBCC family. In terms of assembly, interacts with STING1. Interacts with TICAM1.

The protein localises to the cytoplasm. It carries out the reaction S-ubiquitinyl-[E2 ubiquitin-conjugating enzyme]-L-cysteine + [acceptor protein]-L-lysine = [E2 ubiquitin-conjugating enzyme]-L-cysteine + N(6)-ubiquitinyl-[acceptor protein]-L-lysine.. It functions in the pathway protein modification; protein ubiquitination. Functionally, E3 ubiquitin-protein ligase that plays a key role in innate antiviral immunity by mediating ubiquitination of CGAS and STING1. In response to pathogen- and host-derived double-stranded DNA (dsDNA), targets STING1 to 'Lys-63'-linked ubiquitination, thereby promoting its homodimerization, a step required for the production of type I interferon IFN-beta. Also mediates monoubiquitination of CGAS, thereby promoting CGAS oligomerization and subsequent activation. Independently of its E3 ubiquitin ligase activity, positive regulator of TLR3 signaling. Potentiates extracellular double stranded RNA (dsRNA)-induced expression of IFNB1 and interferon-stimulated genes ISG15, IFIT1/ISG56, CXCL10, OASL and CCL5/RANTES. The polypeptide is E3 ubiquitin-protein ligase TRIM56 (Mus musculus (Mouse)).